Reading from the N-terminus, the 539-residue chain is Putative dimethylaniline monooxygenase [N-oxide-forming] 6 (539 aa).

FAD contacts are provided by residues 9–13 (GAGVS), Glu-32, 40–41 (LW), and 61–62 (NS). 195–198 (SGSD) lines the NADP(+) pocket. The helical transmembrane segment at 518-538 (FYNLLKMLSFPLLLLAVTLTF) threads the bilayer.

Belongs to the FMO family. FAD is required as a cofactor.

The protein localises to the microsome membrane. Its subcellular location is the endoplasmic reticulum membrane. It catalyses the reaction N,N-dimethylaniline + NADPH + O2 + H(+) = N,N-dimethylaniline N-oxide + NADP(+) + H2O. Its function is as follows. It is probable that this protein is only produced in very small quantity or not at all as the gene coding for it seems to be unable to produce full-length transcripts. The protein is Putative dimethylaniline monooxygenase [N-oxide-forming] 6 (FMO6P) of Homo sapiens (Human).